A 270-amino-acid polypeptide reads, in one-letter code: Regulatory protein RecX (270 aa).

This sequence belongs to the RecX family.

It localises to the cytoplasm. Modulates RecA activity. The sequence is that of Regulatory protein RecX from Bacillus cereus (strain G9842).